Reading from the N-terminus, the 876-residue chain is Alanine--tRNA ligase (876 aa).

Residues His560, His564, Cys662, and His666 each contribute to the Zn(2+) site.

It belongs to the class-II aminoacyl-tRNA synthetase family. Zn(2+) serves as cofactor.

It is found in the cytoplasm. It catalyses the reaction tRNA(Ala) + L-alanine + ATP = L-alanyl-tRNA(Ala) + AMP + diphosphate. In terms of biological role, catalyzes the attachment of alanine to tRNA(Ala) in a two-step reaction: alanine is first activated by ATP to form Ala-AMP and then transferred to the acceptor end of tRNA(Ala). Also edits incorrectly charged Ser-tRNA(Ala) and Gly-tRNA(Ala) via its editing domain. This Synechococcus sp. (strain ATCC 27144 / PCC 6301 / SAUG 1402/1) (Anacystis nidulans) protein is Alanine--tRNA ligase.